The sequence spans 262 residues: Expansin-A7 (262 aa).

The N-terminal stretch at 1–30 (MGPISSSWSFNKFFSIVFVVFAISGEFVAG) is a signal peptide. The Expansin-like EG45 domain occupies 55-167 (GGACGYGNLF…RRVPCQRSGG (113 aa)). Cystine bridges form between cysteine 58/cysteine 86, cysteine 89/cysteine 162, and cysteine 94/cysteine 100. The region spanning 177-257 (YWLLIFVMNV…NWSGGKTYKS (81 aa)) is the Expansin-like CBD domain.

Belongs to the expansin family. Expansin A subfamily.

It is found in the secreted. It localises to the cell wall. The protein resides in the membrane. In terms of biological role, causes loosening and extension of plant cell walls by disrupting non-covalent bonding between cellulose microfibrils and matrix glucans. No enzymatic activity has been found. The sequence is that of Expansin-A7 (EXPA7) from Arabidopsis thaliana (Mouse-ear cress).